Consider the following 297-residue polypeptide: Band 7 protein AAEL010189 (297 aa).

Polar residues predominate over residues 1–13 (MGVVESITNSTKP). Residues 1–30 (MGVVESITNSTKPGVTKKSSPEAEDDSNGE) form a disordered region. Residues 37–57 (ILIFLSWVLVVLTMPFSLLVC) traverse the membrane as a helical segment.

The protein belongs to the band 7/mec-2 family.

It localises to the membrane. In Aedes aegypti (Yellowfever mosquito), this protein is Band 7 protein AAEL010189.